Reading from the N-terminus, the 629-residue chain is Forkhead box protein O1-B (629 aa).

Disordered stretches follow at residues 1-54 (MAEP…PEQG), 88-134 (CAHP…SRRN), 211-308 (SWWM…SPFL), and 359-397 (KNNT…QPQV). Residues 36–46 (QPGNSNTSSPA) show a composition bias toward polar residues. Composition is skewed to low complexity over residues 90-107 (HPQQ…THPQ) and 115-133 (PASG…SSRR). Positions 136-230 (WGNMSYADLI…KSGKSPRRRA (95 aa)) form a DNA-binding region, fork-head. Over residues 240–251 (TKSRGRAAKKKM) the composition is skewed to basic residues. Polar residues-rich tracts occupy residues 291–302 (TRASSDASTLSG), 359–377 (KNNT…SPLM), and 385–397 (SYTS…QPQV).

It is found in the cytoplasm. It localises to the nucleus. Functionally, transcription factor that regulates metabolic homeostasis in response to oxidative stress. Binds to the consensus sequence 5'-TT[G/A]TTTTG-3' and the related Daf-16 family binding element (DBE) with consensus sequence 5'-TT[G/A]TTTAC-3'. Main regulator of redox balance and osteoblast numbers and controls bone mass. Orchestrates the endocrine function of the skeleton in regulating glucose metabolism. May act as a positive regulator of apoptosis in cardiac smooth muscle cells as a result of its transcriptional activation of pro-apoptotic genes. This chain is Forkhead box protein O1-B (foxo1b), found in Danio rerio (Zebrafish).